The chain runs to 180 residues: Thebaine synthase 1 (180 aa).

S96 is a binding site for thebaine. Catalysis depends on H111, which acts as the Proton acceptor. Thebaine is bound at residue T127.

The protein belongs to the MLP family. Homodimer (allosteric) and oligomers. Expressed in poppy latex.

It catalyses the reaction (7S)-O-acetylsalutaridinol = thebaine + acetate + H(+). It participates in alkaloid biosynthesis; morphine biosynthesis. Catalyzes the formation of thebaine from (7S)-salutaridinol 7-O-acetate at the expense of labile hydroxylated by-products, which are preferentially produced by spontaneous allylic elimination. The chain is Thebaine synthase 1 from Papaver somniferum (Opium poppy).